A 954-amino-acid chain; its full sequence is Patched domain-containing protein 3 (954 aa).

Residues 1 to 20 (MPWVEPKPRPGPEQKPKLTK) are compositionally biased toward basic and acidic residues. The disordered stretch occupies residues 1 to 103 (MPWVEPKPRP…APLPEEETPE (103 aa)). The span at 42 to 57 (QPPPGPLAPPKSPEPS) shows a compositional bias: pro residues. A compositionally biased stretch (acidic residues) spans 90–102 (ELDDAPLPEEETP). The helical transmembrane segment at 139–159 (WIFLLAPLMLTAALGTGFLYL) threads the bilayer. N-linked (GlcNAc...) asparagine glycans are attached at residues N192, N275, and N279. The next 7 membrane-spanning stretches (helical) occupy residues 297–317 (LTGF…QLLL), 383–403 (VIPV…TSCF), 423–443 (FLAV…FVII), 447–467 (SPFL…SAWH), 486–506 (AAVS…TGIM), 520–540 (GMTL…FMAL), and 603–623 (YFVV…CFHV). The region spanning 383 to 540 (VIPVFHLAYI…ITCFGAFMAL (158 aa)) is the SSD domain. 3 N-linked (GlcNAc...) asparagine glycosylation sites follow: N678, N692, and N737. Helical transmembrane passes span 804-824 (VLVA…YPLC), 826-846 (LWVT…MAFW), 858-878 (LVIC…AFVS), 894-914 (LLGY…CVLA), and 927-947 (IMFL…PVFL).

Belongs to the patched family. Expressed in germ cells of the testis (at protein level). Detected in blood lymph, colon, small intestine, ovary, testis, prostate, thymus and spleen with highest levels in testis.

It localises to the cell projection. The protein resides in the cilium. Its subcellular location is the flagellum membrane. It is found in the endoplasmic reticulum membrane. May play a role in sperm development or sperm function. However, does not appear to have an essential role in spermatogenesis or male fertility. This Homo sapiens (Human) protein is Patched domain-containing protein 3 (PTCHD3).